Consider the following 60-residue polypeptide: Large ribosomal subunit protein bL33 (60 aa).

Belongs to the bacterial ribosomal protein bL33 family.

This chain is Large ribosomal subunit protein bL33, found in Chlorobium phaeobacteroides (strain DSM 266 / SMG 266 / 2430).